We begin with the raw amino-acid sequence, 468 residues long: 6-phospho-beta-galactosidase (468 aa).

Residues glutamine 19, histidine 116, asparagine 159, glutamate 160, and asparagine 297 each coordinate D-galactose 6-phosphate. Residue glutamate 160 is the Proton donor of the active site. Glutamate 375 functions as the Nucleophile in the catalytic mechanism. The D-galactose 6-phosphate site is built by serine 428, tryptophan 429, lysine 435, and tyrosine 437.

Belongs to the glycosyl hydrolase 1 family.

It catalyses the reaction a 6-phospho-beta-D-galactoside + H2O = D-galactose 6-phosphate + an alcohol. It functions in the pathway carbohydrate metabolism; lactose degradation; D-galactose 6-phosphate and beta-D-glucose from lactose 6-phosphate: step 1/1. The protein is 6-phospho-beta-galactosidase of Streptococcus mutans serotype c (strain ATCC 700610 / UA159).